The following is a 375-amino-acid chain: MLLFLLSALVLLTQSLGYLEADMKTYSQRTAPSACTLVMCSSVESGLPGRDGRDGREGPRGEKGDPGLPGAAGKAGMPGEAGPVGPKGDNGSIGEPGPKGDTGPSGPPGPPGVPGPAGREGPLGKQGNIGPQGKPGPKGEAGPKGEVGAPGMQGSAGARGPAGPKGDRGVPGERGAPGNAGAAGSAGVMGPQGSPGARGPPGLKGDKGVPGDKGAKGESGLPDVASLRQQVEALQKQVQHLQAAFSQYKKVELFPNGQSVGEKIFKTAGFVKPFTEAQLVCTQAGGQLASPRSAAENAALQQLVIAQNEAAFLSMTDSKMEGKFTYPTGESLVYSNWAPGEPNDDGGSEDCVEIFTNGKWNDRACGEKRLVVCEF.

The first 21 residues, 1-21, serve as a signal peptide directing secretion; sequence MLLFLLSALVLLTQSLGYLEA. Residues C35 and C40 each carry the S-nitrosocysteine modification. Positions 43-221 are disordered; the sequence is VESGLPGRDG…DKGAKGESGL (179 aa). The 177-residue stretch at 46–222 folds into the Collagen-like domain; it reads GLPGRDGRDG…KGAKGESGLP (177 aa). A compositionally biased stretch (basic and acidic residues) spans 50-65; the sequence is RDGRDGREGPRGEKGD. P78 is modified (4-hydroxyproline). K87 is modified (5-hydroxylysine). N-linked (GlcNAc...) asparagine glycosylation is present at N90. P96 carries the 4-hydroxyproline modification. K99 carries the post-translational modification 5-hydroxylysine. The span at 105 to 114 shows a compositional bias: pro residues; it reads SGPPGPPGVP. 2 stretches are compositionally biased toward low complexity: residues 116-132 and 138-150; these read PAGR…IGPQ and KGEA…VGAP. Residues P171 and P177 each carry the 4-hydroxyproline modification. Residues 173-189 show a composition bias toward low complexity; that stretch reads ERGAPGNAGAAGSAGVM. The segment covering 204–216 has biased composition (basic and acidic residues); that stretch reads KGDKGVPGDKGAK. Positions 223–251 form a coiled coil; it reads DVASLRQQVEALQKQVQHLQAAFSQYKKV. Residues 260 to 374 enclose the C-type lectin domain; that stretch reads VGEKIFKTAG…CGEKRLVVCE (115 aa). 2 disulfides stabilise this stretch: C281–C373 and C351–C365.

The protein belongs to the SFTPD family. As to quaternary structure, oligomeric complex of 4 set of homotrimers. Hydroxylation on proline residues within the sequence motif, GXPG, is most likely to be 4-hydroxy as this fits the requirement for 4-hydroxylation in vertebrates. Post-translationally, S-nitrosylation at Cys-35 and Cys-40 alters the quaternary structure which results in a pro-inflammatory chemoattractive signaling activity with macrophages.

It localises to the secreted. The protein resides in the extracellular space. It is found in the extracellular matrix. Its subcellular location is the surface film. Functionally, contributes to the lung's defense against inhaled microorganisms, organic antigens and toxins. Interacts with compounds such as bacterial lipopolysaccharides, oligosaccharides and fatty acids and modulates leukocyte action in immune response. May participate in the extracellular reorganization or turnover of pulmonary surfactant. Binds strongly maltose residues and to a lesser extent other alpha-glucosyl moieties. In Macaca mulatta (Rhesus macaque), this protein is Pulmonary surfactant-associated protein D (SFTPD).